The chain runs to 267 residues: Glutamate 5-kinase (267 aa).

Residue Lys-14 coordinates ATP. Substrate-binding residues include Ser-54, Asp-141, and Asn-157. Residues Ser-177–Asp-178 and Thr-219–Lys-225 each bind ATP.

The protein belongs to the glutamate 5-kinase family.

It is found in the cytoplasm. It carries out the reaction L-glutamate + ATP = L-glutamyl 5-phosphate + ADP. It participates in amino-acid biosynthesis; L-proline biosynthesis; L-glutamate 5-semialdehyde from L-glutamate: step 1/2. In terms of biological role, catalyzes the transfer of a phosphate group to glutamate to form L-glutamate 5-phosphate. The chain is Glutamate 5-kinase from Streptococcus thermophilus.